We begin with the raw amino-acid sequence, 625 residues long: Phosphomethylpyrimidine synthase (625 aa).

Substrate is bound by residues Asn230, Met259, Tyr288, His324, 344-346, 385-388, and Glu424; these read SRG and DGLR. A Zn(2+)-binding site is contributed by His428. Tyr451 is a substrate binding site. His492 contacts Zn(2+). [4Fe-4S] cluster contacts are provided by Cys572, Cys575, and Cys580.

Belongs to the ThiC family. Homodimer. It depends on [4Fe-4S] cluster as a cofactor.

The catalysed reaction is 5-amino-1-(5-phospho-beta-D-ribosyl)imidazole + S-adenosyl-L-methionine = 4-amino-2-methyl-5-(phosphooxymethyl)pyrimidine + CO + 5'-deoxyadenosine + formate + L-methionine + 3 H(+). Its pathway is cofactor biosynthesis; thiamine diphosphate biosynthesis. Catalyzes the synthesis of the hydroxymethylpyrimidine phosphate (HMP-P) moiety of thiamine from aminoimidazole ribotide (AIR) in a radical S-adenosyl-L-methionine (SAM)-dependent reaction. The sequence is that of Phosphomethylpyrimidine synthase from Xanthomonas oryzae pv. oryzae (strain MAFF 311018).